Here is a 98-residue protein sequence, read N- to C-terminus: C-X-C motif chemokine 10 (98 aa).

The first 21 residues, 1–21 (MNQTAILICCLIFLTLSGIQG), serve as a signal peptide directing secretion. At R26 the chain carries Citrulline; by PAD2. 2 cysteine pairs are disulfide-bonded: C30-C57 and C32-C74.

Belongs to the intercrine alpha (chemokine CxC) family. Monomer, dimer, and tetramer. Interacts with CXCR3 (via N-terminus). In terms of processing, several proteases can mediate post-secretion cleavages. DPP4 cleaves CXCL10 on its N-terminal 2 amino acids leading to an antagonist form of CXCL10. This dominant negative form is capable of binding CXCR3 but does not induce signaling. MMP9 cleaves 9 amino acids instead. Mainly secreted by monocytes, endothelial cells as well as fibroblasts. Expressed by epithelial cells in thymus. Microglial cells produce CXCL10 in response to viral stimulation.

The protein localises to the secreted. Pro-inflammatory cytokine that is involved in a wide variety of processes such as chemotaxis, differentiation, and activation of peripheral immune cells, regulation of cell growth, apoptosis and modulation of angiostatic effects. Plays thereby an important role during viral infections by stimulating the activation and migration of immune cells to the infected sites. Mechanistically, binding of CXCL10 to the CXCR3 receptor activates G protein-mediated signaling and results in downstream activation of phospholipase C-dependent pathway, an increase in intracellular calcium production and actin reorganization. In turn, recruitment of activated Th1 lymphocytes occurs at sites of inflammation. Activation of the CXCL10/CXCR3 axis also plays an important role in neurons in response to brain injury for activating microglia, the resident macrophage population of the central nervous system, and directing them to the lesion site. This recruitment is an essential element for neuronal reorganization. In Homo sapiens (Human), this protein is C-X-C motif chemokine 10 (CXCL10).